Reading from the N-terminus, the 605-residue chain is Isocitrate dehydrogenase kinase/phosphatase (605 aa).

ATP contacts are provided by residues 327–333 and K348; that span reads APGIKGL. The active site involves D383.

It belongs to the AceK family.

It is found in the cytoplasm. The enzyme catalyses L-seryl-[isocitrate dehydrogenase] + ATP = O-phospho-L-seryl-[isocitrate dehydrogenase] + ADP + H(+). In terms of biological role, bifunctional enzyme which can phosphorylate or dephosphorylate isocitrate dehydrogenase (IDH) on a specific serine residue. This is a regulatory mechanism which enables bacteria to bypass the Krebs cycle via the glyoxylate shunt in response to the source of carbon. When bacteria are grown on glucose, IDH is fully active and unphosphorylated, but when grown on acetate or ethanol, the activity of IDH declines drastically concomitant with its phosphorylation. The polypeptide is Isocitrate dehydrogenase kinase/phosphatase (Burkholderia orbicola (strain AU 1054)).